Reading from the N-terminus, the 35-residue chain is Malate dehydrogenase, mitochondrial (35 aa).

Asn7 is a binding site for NAD(+). Arg23 is a substrate binding site.

It belongs to the LDH/MDH superfamily. MDH type 1 family. Homodimer.

The protein resides in the mitochondrion matrix. It carries out the reaction (S)-malate + NAD(+) = oxaloacetate + NADH + H(+). In Capsicum annuum var. annuum (Red pepper), this protein is Malate dehydrogenase, mitochondrial.